Reading from the N-terminus, the 66-residue chain is DNA-directed RNA polymerase subunit Rpo10 (66 aa).

Zn(2+)-binding residues include Cys7, Cys10, Cys44, and Cys45.

This sequence belongs to the archaeal Rpo10/eukaryotic RPB10 RNA polymerase subunit family. As to quaternary structure, part of the RNA polymerase complex. The cofactor is Zn(2+).

It localises to the cytoplasm. The catalysed reaction is RNA(n) + a ribonucleoside 5'-triphosphate = RNA(n+1) + diphosphate. Functionally, DNA-dependent RNA polymerase (RNAP) catalyzes the transcription of DNA into RNA using the four ribonucleoside triphosphates as substrates. The protein is DNA-directed RNA polymerase subunit Rpo10 of Hyperthermus butylicus (strain DSM 5456 / JCM 9403 / PLM1-5).